Here is a 330-residue protein sequence, read N- to C-terminus: Short chain dehydrogenase yanD (330 aa).

5 residues coordinate NADP(+): K57, D86, N113, Y204, and K208. Y204 acts as the Proton donor in catalysis. The active-site Lowers pKa of active site Tyr is the K208.

Belongs to the short-chain dehydrogenases/reductases (SDR) family.

The protein operates within secondary metabolite biosynthesis; terpenoid biosynthesis. In terms of biological role, short chain dehydrogenase; part of the gene cluster that mediates the biosynthesis of yanuthone D, a fungal isoprenoid epoxycyclohexenone that acts as an antibiotic against fungi and bacteria. The first step of the pathway is the synthesis of 6-methylsalicylic acid (6-MSA) by the polyketide synthase yanA. 6-MSA is then converted to m-cresol by the decarboxylase yanB. The cytochrome P450 monooxygenase yanC then catalyzes the oxidation of m-cresol to toluquinol. Epoxidation of toluquinol is then performed by the short chain dehydrogenase yanD, with the help of yanE, and a further prenylation by yanG leads to 7-deacetoxyyanuthone A. The next step is the hydroxylation of C-22 of 7-deacetoxyyanuthone A by the cytochrome P450 monooxygenase yanH to yield 22-deacetylyanuthone A. O-Mevalon transferase yanI then attaches mevalon to the hydroxyl group of 22-deacetylyanuthone A to produce yanuthone E. Finally, the FAD-dependent monooxygenase yanF oxidizes the hydroxyl group at C15 of yanuthone E to form yanuthone D. Furthermore, several branching points in the pathway lead to the production of yanuthones F and G from 7-deacetoxyyanuthone A; yanuthones H and I from 22-deacetylyanuthone A; and yanuthone J from yanuthone E. YanD is also involved in the synthesis of yanuthone X1 which does not have 6-methylsalicylic acid (6-MSA) as precursor. The polypeptide is Short chain dehydrogenase yanD (Aspergillus niger (strain ATCC 1015 / CBS 113.46 / FGSC A1144 / LSHB Ac4 / NCTC 3858a / NRRL 328 / USDA 3528.7)).